Reading from the N-terminus, the 265-residue chain is Interleukin-2 receptor subunit alpha (265 aa).

Residues 1-21 form the signal peptide; sequence MDSYLLMWGLLTLIMVPGCFA. The Sushi 1 domain occupies 22-84; the sequence is ELCDDDPPEI…SWDNQCQCTS (63 aa). At 22 to 240 the chain is on the extracellular side; the sequence is ELCDDDPPEI…ETFIFTTEYQ (219 aa). Cystine bridges form between cysteine 24-cysteine 67, cysteine 49-cysteine 80, and cysteine 51-cysteine 82. Asparagine 70 and asparagine 89 each carry an N-linked (GlcNAc...) asparagine glycan. Polar residues predominate over residues 87-98; it reads TRNTTKQVTPQP. The segment at 87 to 123 is disordered; sequence TRNTTKQVTPQPEEQKERKTTEMQSPMQPVDQASLPG. A Sushi 2 domain is found at 123-186; sequence GHCREPPPWE…WTQPQLICTG (64 aa). Disulfide bonds link cysteine 125–cysteine 168 and cysteine 152–cysteine 184. Residues 190-210 are disordered; it reads TSQFPGEEKPQASPEGRPESE. Residues 195–209 are compositionally biased toward basic and acidic residues; that stretch reads GEEKPQASPEGRPES. The chain crosses the membrane as a helical span at residues 241 to 259; sequence VAVAGCVFLLISVLLLSGL. The Cytoplasmic portion of the chain corresponds to 260–265; that stretch reads TWQRRQ.

As to quaternary structure, non-covalent dimer of an alpha and a beta subunit. IL2R exists in 3 different forms: a high affinity dimer, an intermediate affinity monomer (beta subunit), and a low affinity monomer (alpha subunit). The high and intermediate affinity forms also associate with a gamma subunit.

It is found in the membrane. Its function is as follows. Receptor for interleukin-2. The receptor is involved in the regulation of immune tolerance by controlling regulatory T cells (TREGs) activity. TREGs suppress the activation and expansion of autoreactive T-cells. This chain is Interleukin-2 receptor subunit alpha (IL2RA), found in Pan troglodytes (Chimpanzee).